Here is a 244-residue protein sequence, read N- to C-terminus: UPF0173 metal-dependent hydrolase Rcas_3617 (244 aa).

It belongs to the UPF0173 family.

The protein is UPF0173 metal-dependent hydrolase Rcas_3617 of Roseiflexus castenholzii (strain DSM 13941 / HLO8).